The following is a 92-amino-acid chain: Small ribosomal subunit protein uS19c (92 aa).

This sequence belongs to the universal ribosomal protein uS19 family.

Its subcellular location is the plastid. It localises to the chloroplast. In terms of biological role, protein S19 forms a complex with S13 that binds strongly to the 16S ribosomal RNA. The protein is Small ribosomal subunit protein uS19c of Nicotiana sylvestris (Wood tobacco).